A 69-amino-acid polypeptide reads, in one-letter code: Small, acid-soluble spore protein I (69 aa).

This sequence belongs to the SspI family.

The protein resides in the spore core. The protein is Small, acid-soluble spore protein I of Bacillus mycoides (strain KBAB4) (Bacillus weihenstephanensis).